The chain runs to 356 residues: DNA polymerase IV (356 aa).

The region spanning 7 to 188 (IIHIDMDCFY…LPLKKISGVG (182 aa)) is the UmuC domain. Positions 11 and 106 each coordinate Mg(2+). Residue glutamate 107 is part of the active site.

The protein belongs to the DNA polymerase type-Y family. Monomer. It depends on Mg(2+) as a cofactor.

It is found in the cytoplasm. It carries out the reaction DNA(n) + a 2'-deoxyribonucleoside 5'-triphosphate = DNA(n+1) + diphosphate. In terms of biological role, poorly processive, error-prone DNA polymerase involved in untargeted mutagenesis. Copies undamaged DNA at stalled replication forks, which arise in vivo from mismatched or misaligned primer ends. These misaligned primers can be extended by PolIV. Exhibits no 3'-5' exonuclease (proofreading) activity. May be involved in translesional synthesis, in conjunction with the beta clamp from PolIII. The chain is DNA polymerase IV from Glaesserella parasuis serovar 5 (strain SH0165) (Haemophilus parasuis).